The chain runs to 385 residues: tRNA-specific 2-thiouridylase MnmA (385 aa).

ATP contacts are provided by residues Ala-27–Ser-34 and Leu-53. Cys-121 serves as the catalytic Nucleophile. Cysteines 121 and 217 form a disulfide. Gly-145 is an ATP binding site. The interaction with tRNA stretch occupies residues Lys-167 to Gln-169. Cys-217 serves as the catalytic Cysteine persulfide intermediate.

It belongs to the MnmA/TRMU family.

It localises to the cytoplasm. It catalyses the reaction S-sulfanyl-L-cysteinyl-[protein] + uridine(34) in tRNA + AH2 + ATP = 2-thiouridine(34) in tRNA + L-cysteinyl-[protein] + A + AMP + diphosphate + H(+). Its function is as follows. Catalyzes the 2-thiolation of uridine at the wobble position (U34) of tRNA, leading to the formation of s(2)U34. The chain is tRNA-specific 2-thiouridylase MnmA from Sorangium cellulosum (strain So ce56) (Polyangium cellulosum (strain So ce56)).